A 796-amino-acid chain; its full sequence is Polyribonucleotide nucleotidyltransferase (796 aa).

Asp490 and Asp496 together coordinate Mg(2+). The KH domain occupies 557–616 (PRIESIFINKDKIRNVIGSGGKNIRDICEKTGAKIEIIQDGTVMIYAVNNEAVEYAKSMI). Residues 626 to 693 (GKVFEGTVVE…DREHVQLSMR (68 aa)) form the S1 motif domain. Residues 714 to 736 (SFSDDSSSSGTSSSGSSFKESYS) are compositionally biased toward low complexity. Positions 714–796 (SFSDDSSSSG…HEVPRKPRFF (83 aa)) are disordered. A compositionally biased stretch (basic residues) spans 740-755 (HGSHEKRRSGGSRSSR). Residues 771 to 784 (SDFGNNNRSFSNSR) are compositionally biased toward low complexity. Basic and acidic residues predominate over residues 785–796 (NGHEVPRKPRFF).

The protein belongs to the polyribonucleotide nucleotidyltransferase family. The cofactor is Mg(2+).

It is found in the cytoplasm. It carries out the reaction RNA(n+1) + phosphate = RNA(n) + a ribonucleoside 5'-diphosphate. Its function is as follows. Involved in mRNA degradation. Catalyzes the phosphorolysis of single-stranded polyribonucleotides processively in the 3'- to 5'-direction. The protein is Polyribonucleotide nucleotidyltransferase of Ehrlichia canis (strain Jake).